A 150-amino-acid polypeptide reads, in one-letter code: SKP1-like protein 17 (150 aa).

Residues 92 to 150 are interaction with the F-box domain of F-box proteins; that stretch reads LDAADYLIVIGLKNLIAQAIADYTADKTVNEIRELFNIENDYTPEEEEELRKKNEWAFN.

The protein belongs to the SKP1 family. Part of a SCF (SKP1-cullin-F-box) protein ligase complex. Interacts with CPR1/CPR30. Mainly detected in the siliques.

It is found in the nucleus. Its pathway is protein modification; protein ubiquitination. Involved in ubiquitination and subsequent proteasomal degradation of target proteins. Together with CUL1, RBX1 and a F-box protein, it forms a SCF E3 ubiquitin ligase complex. The functional specificity of this complex depends on the type of F-box protein. In the SCF complex, it serves as an adapter that links the F-box protein to CUL1. Probably implicated in incompatibility response after hybridization. This Arabidopsis thaliana (Mouse-ear cress) protein is SKP1-like protein 17 (ASK17).